The primary structure comprises 229 residues: MDTTTLTDHHFLHILQLASSALPVGAYSYSEGLETLVENGTITSQSTLQQWLEAELSYGAIRLEAAVMVRAYQAATMDDMETLCYWNLWLSAARETQELRNSSWQMGRSLMQLLGKIQPEILPLANAVGNPCNYAIAFGIASAHWQINIQAALLAYLHSWATNLITAGVKLIPLGQTAGQELLLQLQPLISHATVEIMSLKDDELSCCSWGLSLASMQHETQYTRLFRS.

This sequence belongs to the UreF family. UreD, UreF and UreG form a complex that acts as a GTP-hydrolysis-dependent molecular chaperone, activating the urease apoprotein by helping to assemble the nickel containing metallocenter of UreC. The UreE protein probably delivers the nickel.

Its subcellular location is the cytoplasm. Its function is as follows. Required for maturation of urease via the functional incorporation of the urease nickel metallocenter. This Nostoc sp. (strain PCC 7120 / SAG 25.82 / UTEX 2576) protein is Urease accessory protein UreF.